Here is a 27-residue protein sequence, read N- to C-terminus: uncharacterized protein (27 aa).

This is an uncharacterized protein from Saccharomyces cerevisiae (strain ATCC 204508 / S288c) (Baker's yeast).